The following is a 178-amino-acid chain: Caveolin-1 (178 aa).

Position 2 is an N-acetylserine (S2). S2 is modified (phosphoserine). A required for homooligomerization region spans residues 2–94 (SGGKYVDSEG…WKASFTTFTV (93 aa)). Over 2–104 (SGGKYVDSEG…TKYWFYRLLS (103 aa)) the chain is Cytoplasmic. K5 bears the N6-acetyllysine; alternate mark. A Glycyl lysine isopeptide (Lys-Gly) (interchain with G-Cter in ubiquitin); alternate cross-link involves residue K5. Y6 carries the phosphotyrosine modification. Phosphoserine is present on S9. Phosphotyrosine; by ABL1 is present on Y14. Y25 is modified (phosphotyrosine). Residues K26, K30, K39, K47, and K57 each participate in a glycyl lysine isopeptide (Lys-Gly) (interchain with G-Cter in ubiquitin) cross-link. The tract at residues 82-94 (DGIWKASFTTFTV) is interaction with CAVIN3. Positions 105 to 125 (ALFGIPMALIWGIYFAILSFL) form an intramembrane region, helical. The Cytoplasmic segment spans residues 126–178 (HIWAVVPCIKSFLIEIQCISRVYSIYVHTFCDPFFEAVGKIFSNIRINMQKEI). The interacts with SPRY1, SPRY2, SPRY3 and SPRY4 stretch occupies residues 131–142 (VPCIKSFLIEIQ). 3 S-palmitoyl cysteine lipidation sites follow: C133, C143, and C156. Residues 149 to 160 (SIYVHTFCDPFF) form an interacts with SPRY1, SPRY2, and SPRY4 region. Residues 167–178 (FSNIRINMQKEI) form an interacts with SPRY1, SPRY2, SPRY3 and SPRY4 region.

It belongs to the caveolin family. In terms of assembly, homooligomer. Interacts with GLIPR2. Interacts with NOSTRIN. Interacts with SNAP25 and STX1A. Interacts (via the N-terminus) with DPP4; the interaction is direct. Interacts with CTNNB1, CDH1 and JUP. Interacts with PACSIN2; this interaction induces membrane tubulation. Interacts with SLC7A9. Interacts with BMX and BTK. Interacts with TGFBR1. Interacts with CAVIN3 (via leucine-zipper domain) in a cholesterol-sensitive manner. Interacts with CAVIN1. Interacts with EHD2 in a cholesterol-dependent manner. Forms a ternary complex with UBXN6 and VCP; mediates CAV1 targeting to lysosomes for degradation. Interacts with ABCG1; this interaction regulates ABCG1-mediated cholesterol efflux. Interacts with NEU3; this interaction enhances NEU3 sialidase activity within caveola. Interacts (via C-terminus) with SPRY1, SPRY2 (via C-terminus), SPRY3, and SPRY4. Interacts with IGFBP5; this interaction allows trafficking of IGFBP5 from the plasma membrane to the nucleus. In terms of processing, phosphorylated at Tyr-14 by ABL1 in response to oxidative stress. Ubiquitinated. Undergo monoubiquitination and multi- and/or polyubiquitination. Monoubiquitination of N-terminal lysines promotes integration in a ternary complex with UBXN6 and VCP which promotes oligomeric CAV1 targeting to lysosomes for degradation. Ubiquitinated by ZNRF1; leading to degradation and modulation of the TLR4-mediated immune response.

The protein localises to the golgi apparatus membrane. It is found in the cell membrane. Its subcellular location is the membrane. It localises to the caveola. The protein resides in the membrane raft. May act as a scaffolding protein within caveolar membranes. Forms a stable heterooligomeric complex with CAV2 that targets to lipid rafts and drives caveolae formation. Mediates the recruitment of CAVIN proteins (CAVIN1/2/3/4) to the caveolae. Interacts directly with G-protein alpha subunits and can functionally regulate their activity. Involved in the costimulatory signal essential for T-cell receptor (TCR)-mediated T-cell activation. Its binding to DPP4 induces T-cell proliferation and NF-kappa-B activation in a T-cell receptor/CD3-dependent manner. Recruits CTNNB1 to caveolar membranes and may regulate CTNNB1-mediated signaling through the Wnt pathway. Negatively regulates TGFB1-mediated activation of SMAD2/3 by mediating the internalization of TGFBR1 from membrane rafts leading to its subsequent degradation. Binds 20(S)-hydroxycholesterol (20(S)-OHC). The sequence is that of Caveolin-1 (CAV1) from Felis catus (Cat).